The primary structure comprises 146 residues: Large ribosomal subunit protein bL21 (146 aa).

Residues 115 to 146 are disordered; it reads KSISLGKSAPKSSAKKETVKKETKPKSEKSTN. Residues 128–146 are compositionally biased toward basic and acidic residues; it reads AKKETVKKETKPKSEKSTN.

This sequence belongs to the bacterial ribosomal protein bL21 family. As to quaternary structure, part of the 50S ribosomal subunit. Contacts protein L20.

This protein binds to 23S rRNA in the presence of protein L20. In Prochlorococcus marinus (strain MIT 9312), this protein is Large ribosomal subunit protein bL21.